Here is a 323-residue protein sequence, read N- to C-terminus: Phosphopantothenate--cysteine ligase 2 (323 aa).

This sequence belongs to the PPC synthetase family. As to quaternary structure, homodimer.

The enzyme catalyses (R)-4'-phosphopantothenate + L-cysteine + CTP = N-[(R)-4-phosphopantothenoyl]-L-cysteine + CMP + diphosphate + H(+). It functions in the pathway cofactor biosynthesis; coenzyme A biosynthesis; CoA from (R)-pantothenate: step 2/5. Catalyzes the first step in the biosynthesis of coenzyme A from vitamin B5, where cysteine is conjugated to 4'-phosphopantothenate to form 4-phosphopantothenoylcysteine. The polypeptide is Phosphopantothenate--cysteine ligase 2 (Oryza sativa subsp. japonica (Rice)).